A 440-amino-acid polypeptide reads, in one-letter code: Xaa-Pro dipeptidase (440 aa).

Positions 244, 255, 335, 380, and 419 each coordinate Mn(2+).

This sequence belongs to the peptidase M24B family. Bacterial-type prolidase subfamily. Requires Mn(2+) as cofactor.

It carries out the reaction Xaa-L-Pro dipeptide + H2O = an L-alpha-amino acid + L-proline. In terms of biological role, splits dipeptides with a prolyl residue in the C-terminal position. The polypeptide is Xaa-Pro dipeptidase (Shewanella loihica (strain ATCC BAA-1088 / PV-4)).